The following is a 189-amino-acid chain: Methylated-DNA--protein-cysteine methyltransferase (189 aa).

Residues Tyr-128 and Arg-142 each coordinate DNA. Catalysis depends on Cys-159, which acts as the Nucleophile; methyl group acceptor. Ser-165 is a DNA binding site.

The protein belongs to the MGMT family.

The protein localises to the nucleus. The enzyme catalyses a 6-O-methyl-2'-deoxyguanosine in DNA + L-cysteinyl-[protein] = S-methyl-L-cysteinyl-[protein] + a 2'-deoxyguanosine in DNA. The catalysed reaction is a 4-O-methyl-thymidine in DNA + L-cysteinyl-[protein] = a thymidine in DNA + S-methyl-L-cysteinyl-[protein]. Its function is as follows. Involved in the cellular defense against the biological effects of O6-methylguanine (O6-MeG) and O4-methylthymine (O4-MeT) in DNA. Repairs the methylated nucleobase in DNA by stoichiometrically transferring the methyl group to a cysteine residue in the enzyme. This is a suicide reaction: the enzyme is irreversibly inactivated. The protein is Methylated-DNA--protein-cysteine methyltransferase (MGT1) of Kluyveromyces lactis (strain ATCC 8585 / CBS 2359 / DSM 70799 / NBRC 1267 / NRRL Y-1140 / WM37) (Yeast).